The following is a 200-amino-acid chain: dTTP/UTP pyrophosphatase (200 aa).

Catalysis depends on Asp76, which acts as the Proton acceptor.

Belongs to the Maf family. YhdE subfamily. Requires a divalent metal cation as cofactor.

Its subcellular location is the cytoplasm. The enzyme catalyses dTTP + H2O = dTMP + diphosphate + H(+). It carries out the reaction UTP + H2O = UMP + diphosphate + H(+). Functionally, nucleoside triphosphate pyrophosphatase that hydrolyzes dTTP and UTP. May have a dual role in cell division arrest and in preventing the incorporation of modified nucleotides into cellular nucleic acids. The chain is dTTP/UTP pyrophosphatase from Acetivibrio thermocellus (strain ATCC 27405 / DSM 1237 / JCM 9322 / NBRC 103400 / NCIMB 10682 / NRRL B-4536 / VPI 7372) (Clostridium thermocellum).